A 91-amino-acid polypeptide reads, in one-letter code: Sec-independent protein translocase protein TatA (91 aa).

The chain crosses the membrane as a helical span at residues 2-22; sequence ANLGFPELVLIAVVILVLFGW. Positions 43 to 55 are enriched in basic and acidic residues; sequence VSEMKNDGAEAEK. Positions 43-91 are disordered; sequence VSEMKNDGAEAEKTSAASTKTDEITSVSSTDTPQPTVTVESKDEKKHPA. Polar residues predominate over residues 57–81; it reads SAASTKTDEITSVSSTDTPQPTVTV. Basic and acidic residues predominate over residues 82-91; the sequence is ESKDEKKHPA.

Belongs to the TatA/E family. As to quaternary structure, the Tat system comprises two distinct complexes: a TatABC complex, containing multiple copies of TatA, TatB and TatC subunits, and a separate TatA complex, containing only TatA subunits. Substrates initially bind to the TatABC complex, which probably triggers association of the separate TatA complex to form the active translocon.

It is found in the cell membrane. Functionally, part of the twin-arginine translocation (Tat) system that transports large folded proteins containing a characteristic twin-arginine motif in their signal peptide across membranes. TatA could form the protein-conducting channel of the Tat system. In Corynebacterium kroppenstedtii (strain DSM 44385 / JCM 11950 / CIP 105744 / CCUG 35717), this protein is Sec-independent protein translocase protein TatA.